The sequence spans 342 residues: N-acetyl-gamma-glutamyl-phosphate reductase (342 aa).

Residue Cys146 is part of the active site.

The protein belongs to the NAGSA dehydrogenase family. Type 1 subfamily.

Its subcellular location is the cytoplasm. The enzyme catalyses N-acetyl-L-glutamate 5-semialdehyde + phosphate + NADP(+) = N-acetyl-L-glutamyl 5-phosphate + NADPH + H(+). The protein operates within amino-acid biosynthesis; L-arginine biosynthesis; N(2)-acetyl-L-ornithine from L-glutamate: step 3/4. Catalyzes the NADPH-dependent reduction of N-acetyl-5-glutamyl phosphate to yield N-acetyl-L-glutamate 5-semialdehyde. The polypeptide is N-acetyl-gamma-glutamyl-phosphate reductase (Saccharopolyspora erythraea (strain ATCC 11635 / DSM 40517 / JCM 4748 / NBRC 13426 / NCIMB 8594 / NRRL 2338)).